An 872-amino-acid chain; its full sequence is Alanine--tRNA ligase (872 aa).

Residues His566, His570, Cys668, and His672 each contribute to the Zn(2+) site.

This sequence belongs to the class-II aminoacyl-tRNA synthetase family. Zn(2+) is required as a cofactor.

It is found in the cytoplasm. The enzyme catalyses tRNA(Ala) + L-alanine + ATP = L-alanyl-tRNA(Ala) + AMP + diphosphate. Catalyzes the attachment of alanine to tRNA(Ala) in a two-step reaction: alanine is first activated by ATP to form Ala-AMP and then transferred to the acceptor end of tRNA(Ala). Also edits incorrectly charged Ser-tRNA(Ala) and Gly-tRNA(Ala) via its editing domain. This Lactococcus lactis subsp. lactis (strain IL1403) (Streptococcus lactis) protein is Alanine--tRNA ligase.